We begin with the raw amino-acid sequence, 307 residues long: Nuclear polyadenylated RNA-binding protein nab2 (307 aa).

Residues 102 to 135 (STDKSQQSFSVPETSIQPQSSQTPNITSLREEKE) form a disordered region. The segment covering 105–129 (KSQQSFSVPETSIQPQSSQTPNITS) has biased composition (polar residues). 3 consecutive C3H1-type zinc fingers follow at residues 178–202 (TQEV…HPTP), 217–232 (CASG…VKGH), and 254–268 (CKYK…RFIH). Residues 274 to 307 (NMTWRPPSKTEETSLSERSFAVNESEEQLHVPSV) are disordered.

This sequence belongs to the ZC3H14 family.

Its subcellular location is the nucleus. Functionally, RNA-binding protein involved in RNA processing. Acts as a regulator of mRNA stability: binds to mRNAs and pre-mRNAs, preventing their degradation. Involved in the biogenesis of circular RNAs (circRNAs) which are produced by back-splicing circularization of pre-mRNAs. The polypeptide is Nuclear polyadenylated RNA-binding protein nab2 (Schizosaccharomyces pombe (strain 972 / ATCC 24843) (Fission yeast)).